The following is a 440-amino-acid chain: Trigger factor (440 aa).

The PPIase FKBP-type domain occupies 163 to 248 (NDTVSINFKG…INSIKEKVLP (86 aa)).

Belongs to the FKBP-type PPIase family. Tig subfamily.

It is found in the cytoplasm. It carries out the reaction [protein]-peptidylproline (omega=180) = [protein]-peptidylproline (omega=0). In terms of biological role, involved in protein export. Acts as a chaperone by maintaining the newly synthesized protein in an open conformation. Functions as a peptidyl-prolyl cis-trans isomerase. The protein is Trigger factor of Finegoldia magna (strain ATCC 29328 / DSM 20472 / WAL 2508) (Peptostreptococcus magnus).